The following is a 267-amino-acid chain: Chorismate mutase (267 aa).

The 256-residue stretch at Leu-7–Lys-262 folds into the Chorismate mutase domain. L-tyrosine is bound by residues Arg-77, Arg-78, Asn-145, Gly-147, Ser-148, and Thr-151. L-tryptophan contacts are provided by Asn-145, Gly-147, and Ser-148.

Homodimer.

It is found in the cytoplasm. It catalyses the reaction chorismate = prephenate. Its pathway is metabolic intermediate biosynthesis; prephenate biosynthesis; prephenate from chorismate: step 1/1. With respect to regulation, each dimer has two allosteric binding sites that can bind the regulatory effectors tryptophan or tyrosine. Can bind either one tryptophan or one tyrosine, two tryptophan or two tyrosine or one tryptophan and one tyrosine, which differentially affect the catalytic activity. Activated by tryptophan and subject to feedback inhibition by tyrosine. In the presence of both tryptophan and tyrosine, the enzyme is in the activated state. Its function is as follows. Catalyzes the Claisen rearrangement of chorismate to prephenate. Acts at the first branch point in the aromatic amino acid pathway where it steers biosynthesis towards phenylalanine and tyrosine, and away from tryptophan. The polypeptide is Chorismate mutase (Emericella nidulans (strain FGSC A4 / ATCC 38163 / CBS 112.46 / NRRL 194 / M139) (Aspergillus nidulans)).